Reading from the N-terminus, the 427-residue chain is Adenylosuccinate synthetase (427 aa).

Residues 12–18 (GDEGKGK) and 40–42 (GHT) contribute to the GTP site. Asp-13 serves as the catalytic Proton acceptor. Residues Asp-13 and Gly-40 each contribute to the Mg(2+) site. Residues 13–16 (DEGK), 38–41 (NAGH), Thr-128, Arg-142, Gln-223, Thr-238, and Arg-302 each bind IMP. His-41 (proton donor) is an active-site residue. 298–304 (VTTGRAR) serves as a coordination point for substrate. Residues Arg-304, 330 to 332 (KLD), and 412 to 414 (GVG) contribute to the GTP site.

Belongs to the adenylosuccinate synthetase family. As to quaternary structure, homodimer. The cofactor is Mg(2+).

The protein localises to the cytoplasm. The catalysed reaction is IMP + L-aspartate + GTP = N(6)-(1,2-dicarboxyethyl)-AMP + GDP + phosphate + 2 H(+). Its pathway is purine metabolism; AMP biosynthesis via de novo pathway; AMP from IMP: step 1/2. In terms of biological role, plays an important role in the de novo pathway of purine nucleotide biosynthesis. Catalyzes the first committed step in the biosynthesis of AMP from IMP. This is Adenylosuccinate synthetase from Frankia casuarinae (strain DSM 45818 / CECT 9043 / HFP020203 / CcI3).